The sequence spans 966 residues: Phosphoenolpyruvate carboxylase (966 aa).

S10 is subject to Phosphoserine. Active-site residues include H171 and K601.

This sequence belongs to the PEPCase type 1 family. In terms of assembly, homotetramer. The cofactor is Mg(2+).

The protein resides in the cytoplasm. It carries out the reaction oxaloacetate + phosphate = phosphoenolpyruvate + hydrogencarbonate. With respect to regulation, by light-reversible phosphorylation. Its function is as follows. Through the carboxylation of phosphoenolpyruvate (PEP) it forms oxaloacetate, a four-carbon dicarboxylic acid source for the tricarboxylic acid cycle. The chain is Phosphoenolpyruvate carboxylase (PEPC) from Medicago sativa (Alfalfa).